Reading from the N-terminus, the 454-residue chain is Inactive tetrahydroanabasine acetyltransferase pauper allele (454 aa).

The protein belongs to the plant acyltransferase family. Monomer.

The polypeptide is Inactive tetrahydroanabasine acetyltransferase pauper allele (Lupinus albus (White lupine)).